Reading from the N-terminus, the 1653-residue chain is Protein TOPAZ1 (1653 aa).

5 disordered regions span residues 1–88 (MPRA…PGID), 212–238 (GCMH…TDPS), 553–591 (KMKS…KKDR), 855–893 (PNVA…GSMK), and 919–942 (EVTH…SSDL). 2 stretches are compositionally biased toward basic and acidic residues: residues 58-69 (SGREEVESDKSA) and 221-236 (SKSK…DKTD). The span at 561–585 (RSASEVVSNTTEDTSLTNMTHNLTG) shows a compositional bias: polar residues. Composition is skewed to basic and acidic residues over residues 858–877 (AEEH…KKEP) and 920–942 (VTHE…SSDL).

It is found in the cytoplasm. It localises to the cytosol. In terms of biological role, important for normal spermatogenesis and male fertility. Specifically required for progression to the post-meiotic stages of spermatocyte development. Seems to be necessary for normal expression levels of a number of testis-expressed gene transcripts, although its role in this process is unclear. This chain is Protein TOPAZ1 (TOPAZ1), found in Bos taurus (Bovine).